A 65-amino-acid polypeptide reads, in one-letter code: Prokaryotic ubiquitin-like protein Pup (65 aa).

The interval 1-38 (MANAQQQVFGGGGGDDAENNDAPQQGSGTQQVNVTGTD) is disordered. The segment at 21–59 (DAPQQGSGTQQVNVTGTDDLLDEIDGLLETNAEEFVRSY) is ARC ATPase binding. A compositionally biased stretch (polar residues) spans 22 to 34 (APQQGSGTQQVNV). The residue at position 65 (Gln65) is a Deamidated glutamine. Gln65 is covalently cross-linked (Isoglutamyl lysine isopeptide (Gln-Lys) (interchain with K-? in acceptor proteins)).

It belongs to the prokaryotic ubiquitin-like protein family. In terms of assembly, strongly interacts with the proteasome-associated ATPase ARC through a hydrophobic interface; the interacting region of Pup lies in its C-terminal half. There is one Pup binding site per ARC hexamer ring. In terms of processing, is modified by deamidation of its C-terminal glutamine to glutamate by the deamidase Dop, a prerequisite to the subsequent pupylation process.

Its pathway is protein degradation; proteasomal Pup-dependent pathway. Its function is as follows. Protein modifier that is covalently attached to lysine residues of substrate proteins, thereby targeting them for proteasomal degradation. The tagging system is termed pupylation. This Corynebacterium urealyticum (strain ATCC 43042 / DSM 7109) protein is Prokaryotic ubiquitin-like protein Pup.